Here is a 63-residue protein sequence, read N- to C-terminus: Large ribosomal subunit protein uL29 (63 aa).

This sequence belongs to the universal ribosomal protein uL29 family.

The protein is Large ribosomal subunit protein uL29 of Aliivibrio fischeri (strain ATCC 700601 / ES114) (Vibrio fischeri).